Here is a 91-residue protein sequence, read N- to C-terminus: MTTQRRKVELDPDTVERDLARLVLTVVELLRQLMERQALRRVEGGDLTEEQEERIGLTLMLLEDRMELLRTRFGLEPEDLNLDLGPLGPLL.

Belongs to the gas vesicle GvpK family.

It localises to the gas vesicle. Might be involved in nucleating gas vesicle formation. Gas vesicles are hollow, gas filled proteinaceous nanostructures found in some microorganisms. It is not clear what function gas vesicles perform in soil bacteria. This is Gas vesicle protein K from Streptomyces sp. (strain CB03234).